Reading from the N-terminus, the 132-residue chain is Group 2 truncated hemoglobin YjbI (132 aa).

Positions 45, 48, 63, and 76 each coordinate heme.

The protein belongs to the truncated hemoglobin family. Group II subfamily. Monomer. The cofactor is heme.

Hemoglobin-like protein that exhibits a low peroxidase activity. Its very high oxygen affinity may rule out the possibility that it is involved in oxygen transport. This is Group 2 truncated hemoglobin YjbI (yjbI) from Bacillus subtilis (strain 168).